A 217-amino-acid polypeptide reads, in one-letter code: ATP synthase F(0) complex subunit a (217 aa).

Transmembrane regions (helical) follow at residues 20-40 (MNWI…WILP), 70-90 (PAFL…FSLF), 100-120 (MVFS…LSTC), 126-146 (MIAH…MTII), 166-188 (LIAG…IIFI), and 193-215 (MIFE…SLYS).

It belongs to the ATPase A chain family. As to quaternary structure, component of the ATP synthase complex composed at least of ATP5F1A/subunit alpha, ATP5F1B/subunit beta, ATP5MC1/subunit c (homooctomer), MT-ATP6/subunit a, MT-ATP8/subunit 8, ATP5ME/subunit e, ATP5MF/subunit f, ATP5MG/subunit g, ATP5MK/subunit k, ATP5MJ/subunit j, ATP5F1C/subunit gamma, ATP5F1D/subunit delta, ATP5F1E/subunit epsilon, ATP5PF/subunit F6, ATP5PB/subunit b, ATP5PD/subunit d, ATP5PO/subunit OSCP. ATP synthase complex consists of a soluble F(1) head domain (subunits alpha(3) and beta(3)) - the catalytic core - and a membrane F(0) domain - the membrane proton channel (subunits c, a, 8, e, f, g, k and j). These two domains are linked by a central stalk (subunits gamma, delta, and epsilon) rotating inside the F1 region and a stationary peripheral stalk (subunits F6, b, d, and OSCP). Interacts with DNAJC30; interaction is direct.

Its subcellular location is the mitochondrion inner membrane. It carries out the reaction H(+)(in) = H(+)(out). Functionally, subunit a, of the mitochondrial membrane ATP synthase complex (F(1)F(0) ATP synthase or Complex V) that produces ATP from ADP in the presence of a proton gradient across the membrane which is generated by electron transport complexes of the respiratory chain. ATP synthase complex consist of a soluble F(1) head domain - the catalytic core - and a membrane F(1) domain - the membrane proton channel. These two domains are linked by a central stalk rotating inside the F(1) region and a stationary peripheral stalk. During catalysis, ATP synthesis in the catalytic domain of F(1) is coupled via a rotary mechanism of the central stalk subunits to proton translocation. With the subunit c (ATP5MC1), forms the proton-conducting channel in the F(0) domain, that contains two crucial half-channels (inlet and outlet) that facilitate proton movement from the mitochondrial intermembrane space (IMS) into the matrix. Protons are taken up via the inlet half-channel and released through the outlet half-channel, following a Grotthuss mechanism. The protein is ATP synthase F(0) complex subunit a of Rhopalosiphum padi (Bird cherry-oat aphid).